We begin with the raw amino-acid sequence, 132 residues long: NLP effector protein 15 (132 aa).

The short motif at M1–D9 is the Conserved undecapeptide motif I element. The short motif at G16–E22 is the Hepta-peptide GHRHDWE motif II element.

The protein belongs to the Necrosis inducing protein (NPP1) family.

Its subcellular location is the secreted. In terms of biological role, secreted effector that contributes moderately to virulence during infection by P.capsici. Causes only small yellow areas at 3 days after inoculation of host C.annuum leaves; these areas expand somewhat and became necrotic at 7 days after inoculation. Leads only to chlorotic areas, without necrosis at 7 days after non-host N.benthamiana leaves infection. This Phytophthora capsici protein is NLP effector protein 15.